A 715-amino-acid polypeptide reads, in one-letter code: MIPEDHLQYIRIGLASPEQIRSWAERRLPNGELIGRVSKPYTIHYQTHKPEKDGLFCERVFGPIKSGVCACGKYQGTISTKDSPKYCEKCGVEFTEARVRRHRMGYIDLQCPVTHVWYLKNRPSVIARLLNQPLQDIESLVYYDSFLARPVTNEPTLIRLLPTQSKLYKDRSQSTFDKPLELFLFDEPWQSALSNFFSPKWFHLIQIREMLTGADVIHKLLSGLNLTNAMFHARNQWKHLAKKAPESQSEVIEAQGPVPQAEEEKQRDQSIQQQKDAVLRRITLIRDLLQSQTQPEWMVLRTLPVLPPDLRPILELKDGQLIRSDLNELYRRVLYRNQLICQFSVEDPFCISMMQKKLLQQAIDSLLANGAGGNIIRDRNMRPYKSLSDIIKGKKGRFRENLLGKRVDYSGRSVIVVGPYLSLYQCGLPREMAIELFQPFVIRGLIINHFARNPRAAKSMIQRRHPIVWKILKMIVDDHLVILNRAPTLHRLGVQAFQPVLVRERAIHLHPLVCTGFNADFDGDQMAVHVPLSLEAQAEAHLLMSPYFNLLSPGTGDAIVVPTQDMLLGLYALTLGATLGIYSNINTYKYQSDVSFTQKTDSKIITFSNFSDALTAYHQGIITSDLPIWLYCRPEIAVMNNSQGDCPVEAQYQPKGIYLNVYEHSQIRTDKLGKTVQKYIRTTAGRAVLNQQIEQAIQGTEHAYKAVKQLNIILN.

Residues cysteine 69, cysteine 71, cysteine 87, and cysteine 90 each coordinate Zn(2+). The disordered stretch occupies residues alanine 244 to glutamine 272. Mg(2+) is bound by residues aspartate 520, aspartate 522, and aspartate 524.

It belongs to the RNA polymerase beta' chain family. RpoC1 subfamily. In plastids the minimal PEP RNA polymerase catalytic core is composed of four subunits: alpha, beta, beta', and beta''. When a (nuclear-encoded) sigma factor is associated with the core the holoenzyme is formed, which can initiate transcription. Requires Mg(2+) as cofactor. It depends on Zn(2+) as a cofactor.

It localises to the plastid. The protein resides in the chloroplast. It catalyses the reaction RNA(n) + a ribonucleoside 5'-triphosphate = RNA(n+1) + diphosphate. Functionally, DNA-dependent RNA polymerase catalyzes the transcription of DNA into RNA using the four ribonucleoside triphosphates as substrates. This chain is DNA-directed RNA polymerase subunit beta', found in Zygnema circumcarinatum (Green alga).